Here is a 1373-residue protein sequence, read N- to C-terminus: DNA-directed RNA polymerase subunit beta (1373 aa).

It belongs to the RNA polymerase beta chain family. As to quaternary structure, the RNAP catalytic core consists of 2 alpha, 1 beta, 1 beta' and 1 omega subunit. When a sigma factor is associated with the core the holoenzyme is formed, which can initiate transcription.

It catalyses the reaction RNA(n) + a ribonucleoside 5'-triphosphate = RNA(n+1) + diphosphate. In terms of biological role, DNA-dependent RNA polymerase catalyzes the transcription of DNA into RNA using the four ribonucleoside triphosphates as substrates. The sequence is that of DNA-directed RNA polymerase subunit beta from Rickettsia canadensis (strain McKiel).